The sequence spans 460 residues: 2-methylcitrate synthase, mitochondrial (460 aa).

Residues 1–24 (MALPLRTARHASRLAQTIGRRGYA) constitute a mitochondrion transit peptide. CoA-binding residues include R69 and K187. H264 is an oxaloacetate binding site. L299 serves as a coordination point for CoA. H300 is an active-site residue. Positions 341, 343, and 344 each coordinate CoA. Oxaloacetate contacts are provided by H346 and R355. Residue H346 is part of the active site. CoA is bound by residues T395, K396, and N401. D403 is an active-site residue. Oxaloacetate is bound by residues R429 and R449.

The protein belongs to the citrate synthase family. In terms of assembly, homodimer.

It localises to the mitochondrion matrix. It carries out the reaction propanoyl-CoA + oxaloacetate + H2O = (2S,3S)-2-methylcitrate + CoA + H(+). The catalysed reaction is oxaloacetate + acetyl-CoA + H2O = citrate + CoA + H(+). Its pathway is organic acid metabolism; propanoate degradation. Its activity is regulated as follows. Partially inhibited by ATP. Functionally, catalyzes the synthesis of (2S,3S)-2-methylcitrate from propionyl-CoA and oxaloacetate and also from acetyl-CoA and oxaloacetate with a greater efficiency. Also has citrate synthase activity and can substitute for the loss of citA activity. The polypeptide is 2-methylcitrate synthase, mitochondrial (Emericella nidulans (strain FGSC A4 / ATCC 38163 / CBS 112.46 / NRRL 194 / M139) (Aspergillus nidulans)).